The sequence spans 271 residues: Urease accessory protein UreD (271 aa).

It belongs to the UreD family. In terms of assembly, ureD, UreF and UreG form a complex that acts as a GTP-hydrolysis-dependent molecular chaperone, activating the urease apoprotein by helping to assemble the nickel containing metallocenter of UreC. The UreE protein probably delivers the nickel.

It is found in the cytoplasm. Required for maturation of urease via the functional incorporation of the urease nickel metallocenter. This is Urease accessory protein UreD from Halalkalibacterium halodurans (strain ATCC BAA-125 / DSM 18197 / FERM 7344 / JCM 9153 / C-125) (Bacillus halodurans).